Reading from the N-terminus, the 149-residue chain is L-alanine exporter AlaE (149 aa).

Transmembrane regions (helical) follow at residues 16–36 (FAMV…LSGM), 46–66 (LVAI…RDLI), 85–105 (VLAY…TVGA), and 112–132 (AAVS…GYFL).

It belongs to the AlaE exporter family.

The protein resides in the cell inner membrane. Exports L-alanine. The protein is L-alanine exporter AlaE of Salmonella arizonae (strain ATCC BAA-731 / CDC346-86 / RSK2980).